Consider the following 251-residue polypeptide: Probable transcriptional regulatory protein cgR_1708 (251 aa).

The disordered stretch occupies residues 1 to 22 (MAGHSKWATTKHKKAANDAKRG).

This sequence belongs to the TACO1 family.

Its subcellular location is the cytoplasm. This Corynebacterium glutamicum (strain R) protein is Probable transcriptional regulatory protein cgR_1708.